The chain runs to 242 residues: DNA repair protein RecO (242 aa).

The protein belongs to the RecO family. Monomer.

In terms of biological role, involved in DNA repair and RecF pathway recombination. The protein is DNA repair protein RecO of Salmonella schwarzengrund (strain CVM19633).